The primary structure comprises 420 residues: Phytoene synthase 1, chloroplastic (420 aa).

The transit peptide at 1–70 (MAAITLLRSA…GEIARTSPVY (70 aa)) directs the protein to the chloroplast.

It belongs to the phytoene/squalene synthase family. As to expression, expressed in leaves. Highly expressed in developing leaves. Expressed at low levels in roots.

The protein localises to the plastid. It localises to the chloroplast membrane. It is found in the chloroplast. The protein resides in the plastoglobule. The enzyme catalyses 2 (2E,6E,10E)-geranylgeranyl diphosphate = 15-cis-phytoene + 2 diphosphate. Functionally, catalyzes the conversion of geranylgeranyl diphosphate to phytoene. Mediates the first committed step in carotenoid biosynthesis. The protein is Phytoene synthase 1, chloroplastic of Oryza sativa subsp. japonica (Rice).